A 149-amino-acid polypeptide reads, in one-letter code: SsrA-binding protein (149 aa).

The protein belongs to the SmpB family.

It is found in the cytoplasm. Its function is as follows. Required for rescue of stalled ribosomes mediated by trans-translation. Binds to transfer-messenger RNA (tmRNA), required for stable association of tmRNA with ribosomes. tmRNA and SmpB together mimic tRNA shape, replacing the anticodon stem-loop with SmpB. tmRNA is encoded by the ssrA gene; the 2 termini fold to resemble tRNA(Ala) and it encodes a 'tag peptide', a short internal open reading frame. During trans-translation Ala-aminoacylated tmRNA acts like a tRNA, entering the A-site of stalled ribosomes, displacing the stalled mRNA. The ribosome then switches to translate the ORF on the tmRNA; the nascent peptide is terminated with the 'tag peptide' encoded by the tmRNA and targeted for degradation. The ribosome is freed to recommence translation, which seems to be the essential function of trans-translation. In Wolbachia pipientis subsp. Culex pipiens (strain wPip), this protein is SsrA-binding protein.